The following is a 155-amino-acid chain: FAD synthase (155 aa).

ATP-binding positions include 9 to 10 (TF), 14 to 17 (HPGH), and D92.

This sequence belongs to the archaeal FAD synthase family. As to quaternary structure, homodimer. A divalent metal cation serves as cofactor.

The enzyme catalyses FMN + ATP + H(+) = FAD + diphosphate. It functions in the pathway cofactor biosynthesis; FAD biosynthesis; FAD from FMN: step 1/1. Catalyzes the transfer of the AMP portion of ATP to flavin mononucleotide (FMN) to produce flavin adenine dinucleotide (FAD) coenzyme. The sequence is that of FAD synthase from Archaeoglobus profundus (strain DSM 5631 / JCM 9629 / NBRC 100127 / Av18).